Consider the following 738-residue polypeptide: Putative cyclic nucleotide-gated ion channel 7 (738 aa).

Residues 1–104 (MYKSQYISGQ…DKTLLVWNRL (104 aa)) are Cytoplasmic-facing. Residues 105-125 (FVISCILAVSVDPLFFYLPIV) form a helical membrane-spanning segment. The Extracellular segment spans residues 126–139 (DNSGSSCIGIDTKL). Residues 140–160 (AVTTTTLRTIVDVFYLTRMAL) traverse the membrane as a helical segment. Topologically, residues 161-193 (QFRTAYIAPSSRVFGRGELVIDPAKIAERYLTR) are cytoplasmic. The helical transmembrane segment at 194 to 214 (YFVVDFLAVLPLPQIAVWKFL) threads the bilayer. Residues 215–227 (HGSKGSDVLPTKT) are Extracellular-facing. Residues 228–248 (ALLNIVIVQYIPRFVRFIPLT) form a helical membrane-spanning segment. Residues 249 to 268 (SELKKTAGAFAEGAWAGAAY) are Cytoplasmic-facing. The helical transmembrane segment at 269–289 (YLLWYMLASHITGAFWYMLSV) threads the bilayer. Residues 290 to 395 (ERNDTCWRFA…GQGLQTSTFP (106 aa)) lie on the Extracellular side of the membrane. Residues 396 to 416 (GEVLFSIAIAIAGLLLFALLI) traverse the membrane as a helical segment. The Cytoplasmic segment spans residues 417 to 738 (GNMQTYLQSL…KPPEPDFDAE (322 aa)). A nucleoside 3',5'-cyclic phosphate contacts are provided by residues 502 to 632 (LFAN…TFRF) and E573. The tract at residues 618 to 633 (FRRLHSRQVQQTFRFY) is calmodulin-binding. One can recognise an IQ domain in the interval 638-667 (RTWASCFIQAAWRRYSRRKNAELRRIEEKE). 2 disordered regions span residues 671 to 693 (GYEDEYDDESDKRPMVITRSESS) and 715 to 738 (LRSSESSKTLINLQKPPEPDFDAE).

This sequence belongs to the cyclic nucleotide-gated cation channel (TC 1.A.1.5) family. As to quaternary structure, homotetramer or heterotetramer.

Its subcellular location is the cell membrane. Putative cyclic nucleotide-gated ion channel. The chain is Putative cyclic nucleotide-gated ion channel 7 (CNGC7) from Arabidopsis thaliana (Mouse-ear cress).